An 890-amino-acid chain; its full sequence is MTQYTPMIQQYLKVKADYQDAFLFFRLGDFYEMFFEDAVKAAHELEITLTSRDGGSSERIPMCGVPYHAAKNYIEQLVEKGYKVAVCEQVEDPKTAKGVVRREVVQLITPGTMMEGRTIDEKENNFLAALTHFEDGSYALACNDLTTGQNTVTLLTGSVEDILLEVYATGSKEIVVDSSFSKDELNKLTETLKMTISYEDATAIPEGLEHLVKNVSQAKLIKAVGRLFNYVIRTQKRSLDHLQPVEIYYTNQFMKIDVHSKRNLELTETLRTKEKTGSLLWLLDKTKTAMGGRMLKQWMERPLIQKERIEERLEMVETFVNDYFLREDLKEKLKEVYDLERLAGKVAFGNVNARDLLQLRRSLLQVPAILEAISLLDNAYAARLIQGADPCESLTELLGRSIQENPPLSIKDGDIIKDGYNDKLDQYRYVSKNGKTWIAELEKRERDITGIKSLKIGYNRIFGYYIEVTKANLGALPEGRYERKQTLANAERFITDELKEKETLILEAEEKIVQLEYDLFTALREEVKVFIPKLQHLAKVISELDVLQSFATVSEEEQFVKPVLTTKREIFIKDGRHPVVEKVLNGKLYVPNDCIMPENMDVFLITGPNMSGKSTYMRQLALVTVMSQIGCFVPATEAVLPVFDQIFTRIGAADDLISGQSTFMVEMLEAKNAIANASERSLILFDEIGRGTSTYDGMALAQAIIEHIHDQIGAKTLFSTHYHELTVLEDSLDQLKNVHVSAIEENGKVVFLHKIQDGAADKSYGIHVAQLAELPDSLIARAKEVLAQLEGQEEIVIPKRVEVKEQEVIPEPVVVKEEPVAIEETKVDNEEESQLSFFGAEQSSKKQDKPVLDAKETAVLTQIKKIDLLDMTPLEAMNELYRLQKKLKKG.

Residue 607 to 614 participates in ATP binding; that stretch reads GPNMSGKS.

The protein belongs to the DNA mismatch repair MutS family.

Functionally, this protein is involved in the repair of mismatches in DNA. It is possible that it carries out the mismatch recognition step. This protein has a weak ATPase activity. In Bacillus thuringiensis (strain Al Hakam), this protein is DNA mismatch repair protein MutS.